Reading from the N-terminus, the 137-residue chain is Large ribosomal subunit protein bL17 (137 aa).

Belongs to the bacterial ribosomal protein bL17 family. Part of the 50S ribosomal subunit. Contacts protein L32.

The chain is Large ribosomal subunit protein bL17 from Bradyrhizobium sp. (strain ORS 278).